The sequence spans 187 residues: Elongation factor P (187 aa).

This sequence belongs to the elongation factor P family.

It localises to the cytoplasm. Its pathway is protein biosynthesis; polypeptide chain elongation. Involved in peptide bond synthesis. Stimulates efficient translation and peptide-bond synthesis on native or reconstituted 70S ribosomes in vitro. Probably functions indirectly by altering the affinity of the ribosome for aminoacyl-tRNA, thus increasing their reactivity as acceptors for peptidyl transferase. The chain is Elongation factor P from Wolinella succinogenes (strain ATCC 29543 / DSM 1740 / CCUG 13145 / JCM 31913 / LMG 7466 / NCTC 11488 / FDC 602W) (Vibrio succinogenes).